The sequence spans 248 residues: ATP synthase subunit a, chloroplastic (248 aa).

5 consecutive transmembrane segments (helical) span residues 38–58, 96–116, 135–155, 200–220, and 221–241; these read QVLLTSWVVIAVLLGSATIAV, VPFIGTMFLFIFVSNWSGALL, INTTVALALLTSVAYFYAGLT, LVVAVLVSLVPLIVPIPVMFL, and GLFTSGIQALIFATLAAAYIG.

The protein belongs to the ATPase A chain family. F-type ATPases have 2 components, CF(1) - the catalytic core - and CF(0) - the membrane proton channel. CF(1) has five subunits: alpha(3), beta(3), gamma(1), delta(1), epsilon(1). CF(0) has four main subunits: a, b, b' and c.

It localises to the plastid. Its subcellular location is the chloroplast thylakoid membrane. In terms of biological role, key component of the proton channel; it plays a direct role in the translocation of protons across the membrane. This Pinus thunbergii (Japanese black pine) protein is ATP synthase subunit a, chloroplastic.